The primary structure comprises 455 residues: tRNA modification GTPase MnmE (455 aa).

(6S)-5-formyl-5,6,7,8-tetrahydrofolate-binding residues include Arg-24, Glu-81, and Lys-120. Residues 216–378 enclose the TrmE-type G domain; it reads GMTVVIAGRP…LREHLKACMG (163 aa). Asn-226 serves as a coordination point for K(+). Residues 226 to 231, 245 to 251, 270 to 273, 335 to 338, and 359 to 361 contribute to the GTP site; these read NAGKSS, TDIAGTT, DTAG, NKAD, and SAR. Ser-230 is a Mg(2+) binding site. Positions 245, 247, and 250 each coordinate K(+). Residue Thr-251 coordinates Mg(2+). A (6S)-5-formyl-5,6,7,8-tetrahydrofolate-binding site is contributed by Lys-455.

The protein belongs to the TRAFAC class TrmE-Era-EngA-EngB-Septin-like GTPase superfamily. TrmE GTPase family. Homodimer. Heterotetramer of two MnmE and two MnmG subunits. It depends on K(+) as a cofactor.

The protein resides in the cytoplasm. Functionally, exhibits a very high intrinsic GTPase hydrolysis rate. Involved in the addition of a carboxymethylaminomethyl (cmnm) group at the wobble position (U34) of certain tRNAs, forming tRNA-cmnm(5)s(2)U34. This Pseudomonas aeruginosa (strain ATCC 15692 / DSM 22644 / CIP 104116 / JCM 14847 / LMG 12228 / 1C / PRS 101 / PAO1) protein is tRNA modification GTPase MnmE.